The sequence spans 248 residues: Anamorsin homolog (248 aa).

The interval 4-129 is N-terminal SAM-like domain; the sequence is FKGLQKTLYI…ETGSSARLSF (126 aa). The interval 130–161 is linker; it reads AKKDASALNVWKISGDDEELIDEEDLLDEEDK. Residues Cys172, Cys181, Cys184, and Cys186 each coordinate [2Fe-2S] cluster. Residues 172–186 form a fe-S binding site A region; that stretch reads CSTTGKRKACKNCSC. Cys209, Cys212, Cys220, and Cys223 together coordinate [4Fe-4S] cluster. 2 consecutive short sequence motifs (cx2C motif) follow at residues 209–212 and 220–223; these read CGNC and CSTC. Residues 209–223 form a fe-S binding site B region; sequence CGNCYLGDAFRCSTC.

The protein belongs to the anamorsin family. As to quaternary structure, monomer. It depends on [2Fe-2S] cluster as a cofactor. The cofactor is [4Fe-4S] cluster.

Its subcellular location is the cytoplasm. The protein resides in the mitochondrion intermembrane space. In terms of biological role, component of the cytosolic iron-sulfur (Fe-S) protein assembly (CIA) machinery. Required for the maturation of extramitochondrial Fe-S proteins. Part of an electron transfer chain functioning in an early step of cytosolic Fe-S biogenesis, facilitating the de novo assembly of a [4Fe-4S] cluster on the cytosolic Fe-S scaffold complex. Electrons are transferred from NADPH via a FAD- and FMN-containing diflavin oxidoreductase. Together with the diflavin oxidoreductase, also required for the assembly of the diferric tyrosyl radical cofactor of ribonucleotide reductase (RNR), probably by providing electrons for reduction during radical cofactor maturation in the catalytic small subunit. This Drosophila ananassae (Fruit fly) protein is Anamorsin homolog.